A 423-amino-acid polypeptide reads, in one-letter code: MARKKIREYDSKRLLKEHLKRLAGIDLQILSAQVTQSTDFTELVNQQPWLSTMKLVVKPDMLFGKRGKSGLVALNLDIAQVKEFVKERLGVEVEMGGCKAPITTFIVEPFVPHDQEYYLSIVSERLGSTISFSECGGIEIEENWDKVKTIFLPTEKPMTPDACAPLIATLPLEARGKIGDFIKGVFAVFQDLDFSFLEMNPFTIVNGEPYPLDMRGELDDTAAFKNFKKWGNIEFPLPFGRVLSSTEGFIHDLDEKTSASLKFTVLNPKGRIWTMVAGGGASVIYADTVGDLGYASELGNYAEYSGAPNEEEVLQYARVVLDCATADPDGRKRALLIGGGIANFTDVGATFSGIIRALREKESKLKAARMHIYVRRGGPNYQTGLAKMRKLGAELGVPIEVYGPEATMTGICKQAIECVMAAA.

Citrate contacts are provided by Asn-343, Thr-345, and Arg-376.

The protein belongs to the succinate/malate CoA ligase beta subunit family. As to quaternary structure, heterooctamer of 4 alpha and 4 beta chains.

The protein localises to the cytoplasm. It is found in the cytosol. The catalysed reaction is oxaloacetate + acetyl-CoA + ADP + phosphate = citrate + ATP + CoA. ATP citrate-lyase is the primary enzyme responsible for the synthesis of cytosolic acetyl-CoA, used for the elongation of fatty acids and biosynthesis of isoprenoids, flavonoids and malonated derivatives. May supply substrate to the cytosolic acetyl-CoA carboxylase, which generates the malonyl-CoA used for the synthesis of a multitude of compounds, including very long chain fatty acids and flavonoids. In contrast to all known animal ACL enzymes having a homomeric structure, plant ACLs are composed of alpha and beta chains. This is ATP-citrate synthase alpha chain protein 2 (ACLA-2) from Oryza sativa subsp. japonica (Rice).